We begin with the raw amino-acid sequence, 261 residues long: Ribonuclease HII (261 aa).

The RNase H type-2 domain maps to 71–260 (HYIAGVDEVG…LHKYRHNTLL (190 aa)). A divalent metal cation is bound by residues aspartate 77, glutamate 78, and aspartate 169.

The protein belongs to the RNase HII family. It depends on Mn(2+) as a cofactor. Mg(2+) serves as cofactor.

The protein resides in the cytoplasm. The catalysed reaction is Endonucleolytic cleavage to 5'-phosphomonoester.. Endonuclease that specifically degrades the RNA of RNA-DNA hybrids. The chain is Ribonuclease HII from Oceanobacillus iheyensis (strain DSM 14371 / CIP 107618 / JCM 11309 / KCTC 3954 / HTE831).